Here is a 36-residue protein sequence, read N- to C-terminus: Termicin (36 aa).

Intrachain disulfides connect Cys-2–Cys-24, Cys-7–Cys-29, and Cys-11–Cys-31. Glycine amide is present on Gly-36.

Expressed in salivary glands and hemocytes.

The protein resides in the secreted. Its function is as follows. Weak activity against Gram-positive bacteria B.megaterium, S.pyogenes and M.luteus, strong activity against yeasts C.albicans, C.neoformans and S.cerevisiae and filamentous fungi F.oxysporum, F.culmorum, N.crassa and N.hematococca. Less active against filamentous fungus T.viride. Inactive against Gram-positive bacteria A.viridans and S.aureus, filamentous fungi A.fumigatus and B.bassiana and yeast C.glabrata. This Pseudacanthotermes spiniger protein is Termicin.